The following is a 67-amino-acid chain: uncharacterized protein (67 aa).

A helical membrane pass occupies residues 19-39; the sequence is ISFIIFFFFYFFFFYFFYGFW.

The protein resides in the membrane. This is an uncharacterized protein from Dictyostelium discoideum (Social amoeba).